Reading from the N-terminus, the 507-residue chain is MLAPPEVAALPDRLTFKPLGIDTWQEHVIYMHPDCAICRAEGFTAQARVEVRIGLRSLIATLNLVGSGLLEMCEVSLSVSAVETLMARPGDIVTVSHAPALESLRAVRAKIYGAHLDTHQLASVVGDIAKERYADVHIAAFLSACAGGRMSVKETIDLTQAMVDSGECLEWDREIVADKHCVGGLPGNRTSPIVVAIAAAAGLLLPKTSSRAITSPAGTADTMETLTRVALSATELRRVVDRVGASLAWGGALSLSPADDVLIRVERALDVDSDAQLAASILSKKIAAGSTHVLIDVPVGPTAKVRSLQDLERLRMLLERVARSFGVRVTIVRTDGSQPVGRGIGPALEARDVLAVLQRSPAAPFDLRERSLLLAATLLEFCGAVEQGAGLEMATGVLDSGAAWRKFEEICEAQGGLRVPGEAIFRRDVVAEQDGIVTEIDNRHLARIAKLAGAPMRQVAGVEMHVRLHDQVKAGRPLFTIHAQASGELEYSVAYALMHPAVSIAPT.

Belongs to the thymidine/pyrimidine-nucleoside phosphorylase family. Type 2 subfamily.

The enzyme catalyses thymidine + phosphate = 2-deoxy-alpha-D-ribose 1-phosphate + thymine. This chain is Putative thymidine phosphorylase, found in Ralstonia nicotianae (strain ATCC BAA-1114 / GMI1000) (Ralstonia solanacearum).